The following is a 139-amino-acid chain: Small ribosomal subunit protein bS16 (139 aa).

A disordered region spans residues 84 to 139; it reads KGEPAPAPLLQPAEKAARPSFEAIGGEDEGKGEAITQKKKADKKDEAAAESSASEA.

It belongs to the bacterial ribosomal protein bS16 family.

In Streptomyces coelicolor (strain ATCC BAA-471 / A3(2) / M145), this protein is Small ribosomal subunit protein bS16.